A 107-amino-acid polypeptide reads, in one-letter code: uncharacterized protein (107 aa).

A helical transmembrane segment spans residues 62–79 (LLVVIVYYFSHVGSFSLA).

The protein localises to the nucleus membrane. This is an uncharacterized protein from Schizosaccharomyces pombe (strain 972 / ATCC 24843) (Fission yeast).